The chain runs to 475 residues: Ornithine aminotransferase, mitochondrial (475 aa).

Residues 1–16 (MAATTRRLLYYVSKRF) constitute a mitochondrion transit peptide. The segment at 23–43 (RSYGGLPQSNSKSPPSSSQRL) is disordered. Positions 29 to 41 (PQSNSKSPPSSSQ) are enriched in low complexity. Pyridoxal 5'-phosphate contacts are provided by residues 142-143 (GA) and phenylalanine 177. Arginine 180 is a binding site for L-ornithine. Residue 265 to 268 (DEVQ) participates in pyridoxal 5'-phosphate binding. Position 294 is an N6-(pyridoxal phosphate)lysine (lysine 294). Residue serine 323 participates in L-ornithine binding. Threonine 324 is a binding site for pyridoxal 5'-phosphate.

It belongs to the class-III pyridoxal-phosphate-dependent aminotransferase family. As to quaternary structure, homotetramer. Requires pyridoxal 5'-phosphate as cofactor.

The protein localises to the mitochondrion matrix. It catalyses the reaction a 2-oxocarboxylate + L-ornithine = L-glutamate 5-semialdehyde + an L-alpha-amino acid. The protein operates within amino-acid biosynthesis; L-proline biosynthesis; L-glutamate 5-semialdehyde from L-ornithine: step 1/1. Mediates degradation of arginine for nitrogen recycling. Plays a role in non-host disease resistance by regulating pyrroline-5-carboxylate metabolism-induced hypersensitive response. In Arabidopsis thaliana (Mouse-ear cress), this protein is Ornithine aminotransferase, mitochondrial.